Consider the following 228-residue polypeptide: Fibrillarin-like rRNA/tRNA 2'-O-methyltransferase (228 aa).

S-adenosyl-L-methionine contacts are provided by residues 85–86 (TT), 103–104 (EF), 128–129 (DA), and 148–151 (DVAQ).

This sequence belongs to the methyltransferase superfamily. Fibrillarin family. Interacts with nop5. Component of box C/D small ribonucleoprotein (sRNP) particles that contain rpl7ae, FlpA and nop5, plus a guide RNA.

In terms of biological role, involved in pre-rRNA and tRNA processing. Utilizes the methyl donor S-adenosyl-L-methionine to catalyze the site-specific 2'-hydroxyl methylation of ribose moieties in rRNA and tRNA. Site specificity is provided by a guide RNA that base pairs with the substrate. Methylation occurs at a characteristic distance from the sequence involved in base pairing with the guide RNA. This Methanococcus voltae protein is Fibrillarin-like rRNA/tRNA 2'-O-methyltransferase.